The following is a 397-amino-acid chain: Na(+)/H(+) antiporter NhaA 2 (397 aa).

Transmembrane regions (helical) follow at residues 9-29 (LHNPAASGILIFLAAVAAMAV), 59-79 (LLLWINDGLMAVFFLLVGLEL), 95-115 (ILPVVGAVGGIALPAAIYTLI), 125-145 (GWAIPTATDIAFALGILALLG), 154-174 (LFLLTLAIIDDLAAILIIAFF), 177-197 (SELSPASLMIAGSAIGTLILM), 222-242 (SGVHATLAGVVLGFVIPLKGE), 260-280 (VVGLGILPLFAFANAGVSLQG), 292-312 (LGIALGLFLGKQIGVFGFVWL), 332-352 (GVALLCGVGFTMSLFISSLAF), and 371-391 (LGILTGSILSGIFGYILLRFS).

Belongs to the NhaA Na(+)/H(+) (TC 2.A.33) antiporter family.

Its subcellular location is the cell inner membrane. The catalysed reaction is Na(+)(in) + 2 H(+)(out) = Na(+)(out) + 2 H(+)(in). Its function is as follows. Na(+)/H(+) antiporter that extrudes sodium in exchange for external protons. The polypeptide is Na(+)/H(+) antiporter NhaA 2 (Magnetococcus marinus (strain ATCC BAA-1437 / JCM 17883 / MC-1)).